A 182-amino-acid chain; its full sequence is tRNA-splicing endonuclease (182 aa).

Residues Tyr-119, His-127, and Lys-158 contribute to the active site.

Belongs to the tRNA-intron endonuclease family. Archaeal short subfamily. Homotetramer; although the tetramer contains four active sites, only two participate in the cleavage. Therefore, it should be considered as a dimer of dimers.

It catalyses the reaction pretRNA = a 3'-half-tRNA molecule with a 5'-OH end + a 5'-half-tRNA molecule with a 2',3'-cyclic phosphate end + an intron with a 2',3'-cyclic phosphate and a 5'-hydroxyl terminus.. In terms of biological role, endonuclease that removes tRNA introns. Cleaves pre-tRNA at the 5'- and 3'-splice sites to release the intron. The products are an intron and two tRNA half-molecules bearing 2',3' cyclic phosphate and 5'-OH termini. Recognizes a pseudosymmetric substrate in which 2 bulged loops of 3 bases are separated by a stem of 4 bp. This chain is tRNA-splicing endonuclease, found in Saccharolobus islandicus (strain M.16.27) (Sulfolobus islandicus).